The sequence spans 480 residues: MALSQGTKKKVCYYYDGDVGNYYYGQGHPMKPHRIRMTHNLLLNYGLYRKMEIYRPHKASAEEMTKYHSDDYIKFLRSIRPDNMSEYSKQMQRFNVGEDCPVFDGLFEFCQLSTGGSVASAVKLNKQQTDISVNWSGGLHHAKKSEASGFCYVNDIVLAILELLKYHQRVVYIDIDIHHGDGVEEAFYTTDRVMSVSFHKYGEYFPGTGDLRDIGAGKGKYYAVNYPLRDGIDDESYEAIFKPVMTKVMEMFQPSAVVLQCGADSLSGDRLGCFNLTIKGHAKCVEFIKTFNLPMLMLGGGGYTIRNVARCWTYETAVALDSEIPNELPYNDYFEYFGPDFKLHISPSNMTNQNTNEYLEKIKQRLFENLRMLPHAPGVQMQAIPEDSVHDDSGEEDEEDPDKRISIRSSDKRIACDEEFSDSEDEGEGGRKNVANFKKVKRVKTEEEKEGEDKKDVKEEEKAKDEKTDSKRVKEETKSV.

Residues 10-321 (KVCYYYDGDV…WTYETAVALD (312 aa)) are histone deacetylase. Residue H141 is part of the active site. Positions 387-480 (DSVHDDSGEE…KRVKEETKSV (94 aa)) are disordered. Basic and acidic residues predominate over residues 401–416 (PDKRISIRSSDKRIAC). Residues 417–427 (DEEFSDSEDEG) are compositionally biased toward acidic residues. Residues 443–480 (VKTEEEKEGEDKKDVKEEEKAKDEKTDSKRVKEETKSV) show a composition bias toward basic and acidic residues.

It belongs to the histone deacetylase family. HD type 1 subfamily. Found in a large complex with RBBP4 and MI-2.

It localises to the nucleus. Its subcellular location is the cytoplasm. It carries out the reaction N(6)-acetyl-L-lysyl-[histone] + H2O = L-lysyl-[histone] + acetate. The enzyme catalyses N(6)-acetyl-L-lysyl-[protein] + H2O = L-lysyl-[protein] + acetate. It catalyses the reaction N(6)-(2E)-butenoyl-L-lysyl-[protein] + H2O = (2E)-2-butenoate + L-lysyl-[protein]. Functionally, histone deacetylase that catalyzes the deacetylation of lysine residues on the N-terminal part of the core histones (H2A, H2B, H3 and H4). Histone deacetylation gives a tag for epigenetic repression and plays an important role in transcriptional regulation, cell cycle progression and developmental events. Histone deacetylases act via the formation of large multiprotein complexes. Also functions as a deacetylase for non-histone proteins. In addition to protein deacetylase activity, also has protein-lysine deacylase activity: acts as a protein decrotonylase by mediating decrotonylation ((2E)-butenoyl) of histones. This Xenopus laevis (African clawed frog) protein is Probable histone deacetylase 1-B (hdac1-b).